The chain runs to 103 residues: Histone H4 (103 aa).

The span at methionine 1 to glycine 14 shows a compositional bias: gly residues. The segment at methionine 1 to arginine 20 is disordered. An N6-acetyl-N6-methyllysine; alternate mark is found at lysine 6 and lysine 13. The DNA-binding element occupies lysine 17–lysine 21.

The protein belongs to the histone H4 family. In terms of assembly, the nucleosome is a histone octamer containing two molecules each of H2A, H2B, H3 and H4 assembled in one H3-H4 heterotetramer and two H2A-H2B heterodimers. The octamer wraps approximately 147 bp of DNA.

It localises to the nucleus. The protein localises to the chromosome. Core component of nucleosome. Nucleosomes wrap and compact DNA into chromatin, limiting DNA accessibility to the cellular machineries which require DNA as a template. Histones thereby play a central role in transcription regulation, DNA repair, DNA replication and chromosomal stability. DNA accessibility is regulated via a complex set of post-translational modifications of histones, also called histone code, and nucleosome remodeling. In Trichogramma cacaeciae (Moth egg parasite), this protein is Histone H4.